The primary structure comprises 1995 residues: uncharacterized protein (1995 aa).

A run of 7 helical transmembrane segments spans residues Asn31–Lys51, Phe53–Ala73, Leu106–Thr126, Phe157–Leu177, Ile212–Ser232, Phe254–Gln274, and Ile307–Tyr327. Disordered regions lie at residues Ser1418 to Ser1441 and Asp1848 to Pro1883. Basic residues-rich tracts occupy residues Ser1422 to Ser1441 and Pro1853 to Asp1863.

It belongs to the ycf78 family.

It localises to the plastid. The protein localises to the chloroplast membrane. Functionally, essential for cell growth. May be involved in binding chloroplast DNA to either the chloroplast envelope or the thylakoid membrane. This is an uncharacterized protein from Chlamydomonas reinhardtii (Chlamydomonas smithii).